Consider the following 150-residue polypeptide: D-aminoacyl-tRNA deacylase (150 aa).

A Gly-cisPro motif, important for rejection of L-amino acids motif is present at residues 138-139 (GP).

The protein belongs to the DTD family. In terms of assembly, homodimer.

It localises to the cytoplasm. The enzyme catalyses glycyl-tRNA(Ala) + H2O = tRNA(Ala) + glycine + H(+). It carries out the reaction a D-aminoacyl-tRNA + H2O = a tRNA + a D-alpha-amino acid + H(+). In terms of biological role, an aminoacyl-tRNA editing enzyme that deacylates mischarged D-aminoacyl-tRNAs. Also deacylates mischarged glycyl-tRNA(Ala), protecting cells against glycine mischarging by AlaRS. Acts via tRNA-based rather than protein-based catalysis; rejects L-amino acids rather than detecting D-amino acids in the active site. By recycling D-aminoacyl-tRNA to D-amino acids and free tRNA molecules, this enzyme counteracts the toxicity associated with the formation of D-aminoacyl-tRNA entities in vivo and helps enforce protein L-homochirality. The sequence is that of D-aminoacyl-tRNA deacylase from Dechloromonas aromatica (strain RCB).